A 279-amino-acid polypeptide reads, in one-letter code: Acetylglutamate kinase (279 aa).

Residues 64-65 (GG), R86, and N177 contribute to the substrate site.

The protein belongs to the acetylglutamate kinase family. ArgB subfamily.

It localises to the cytoplasm. The catalysed reaction is N-acetyl-L-glutamate + ATP = N-acetyl-L-glutamyl 5-phosphate + ADP. Its pathway is amino-acid biosynthesis; L-arginine biosynthesis; N(2)-acetyl-L-ornithine from L-glutamate: step 2/4. Catalyzes the ATP-dependent phosphorylation of N-acetyl-L-glutamate. This is Acetylglutamate kinase from Campylobacter jejuni (strain RM1221).